The sequence spans 68 residues: Small ribosomal subunit protein bS21 (68 aa).

The protein belongs to the bacterial ribosomal protein bS21 family.

In Paracoccus denitrificans (strain Pd 1222), this protein is Small ribosomal subunit protein bS21.